We begin with the raw amino-acid sequence, 630 residues long: 1-deoxy-D-xylulose-5-phosphate synthase (630 aa).

Residues His-72 and 113 to 115 (GHS) each bind thiamine diphosphate. Asp-144 is a binding site for Mg(2+). Thiamine diphosphate-binding positions include 145 to 146 (GA), Asn-173, Tyr-284, and Glu-367. Asn-173 serves as a coordination point for Mg(2+).

It belongs to the transketolase family. DXPS subfamily. As to quaternary structure, homodimer. It depends on Mg(2+) as a cofactor. The cofactor is thiamine diphosphate.

It catalyses the reaction D-glyceraldehyde 3-phosphate + pyruvate + H(+) = 1-deoxy-D-xylulose 5-phosphate + CO2. It participates in metabolic intermediate biosynthesis; 1-deoxy-D-xylulose 5-phosphate biosynthesis; 1-deoxy-D-xylulose 5-phosphate from D-glyceraldehyde 3-phosphate and pyruvate: step 1/1. In terms of biological role, catalyzes the acyloin condensation reaction between C atoms 2 and 3 of pyruvate and glyceraldehyde 3-phosphate to yield 1-deoxy-D-xylulose-5-phosphate (DXP). The sequence is that of 1-deoxy-D-xylulose-5-phosphate synthase from Bacillus cereus (strain AH820).